A 902-amino-acid chain; its full sequence is Potassium/sodium hyperpolarization-activated cyclic nucleotide-gated channel 1 (902 aa).

Positions methionine 1–glycine 75 are disordered. The Cytoplasmic segment spans residues methionine 1 to arginine 131. A helical membrane pass occupies residues phenylalanine 132–isoleucine 153. The Extracellular segment spans residues threonine 154–threonine 162. Residues proline 163–phenylalanine 183 form a helical membrane-spanning segment. The Cytoplasmic portion of the chain corresponds to arginine 184–methionine 204. A helical membrane pass occupies residues asparagine 205 to phenylalanine 225. The Extracellular portion of the chain corresponds to leucine 226–threonine 249. Residues lysine 250–tryptophan 270 traverse the membrane as a helical; Voltage-sensor segment. Residues glutamate 271–valine 284 lie on the Cytoplasmic side of the membrane. The chain crosses the membrane as a helical span at residues valine 285–leucine 307. At valine 308–glutamine 333 the chain is on the extracellular side. Asparagine 327 is a glycosylation site (N-linked (GlcNAc...) asparagine). Residues tyrosine 334 to proline 355 constitute an intramembrane region (pore-forming). Residues cysteine 347–glycine 351 carry the Selectivity filter motif. Residues valine 356–aspartate 360 lie on the Extracellular side of the membrane. A helical membrane pass occupies residues leucine 361–histidine 381. The Cytoplasmic portion of the chain corresponds to alanine 382–leucine 902. Residues glycine 528, glutamate 529, cysteine 531, arginine 538, threonine 539, arginine 579, and arginine 582 each coordinate 3',5'-cyclic AMP. Disordered stretches follow at residues threonine 634 to alanine 681, alanine 713 to serine 824, and methionine 858 to leucine 902. Composition is skewed to low complexity over residues threonine 639–serine 680, glutamine 720–proline 736, and glutamine 744–glutamine 769. A compositionally biased stretch (polar residues) spans threonine 770–threonine 793. Residues arginine 867–alanine 877 show a composition bias toward pro residues. Basic and acidic residues predominate over residues lysine 889–leucine 902.

The protein belongs to the potassium channel HCN family. Homotetramer. Heterotetramer with HCN2. The potassium channel is composed of a homo- or heterotetrameric complex of pore-forming subunits. Interacts with KCNE2. Interacts with the SH3 domain of CSK. As to expression, highly expressed in cerebral cortex, cerebellum, throughout the hippocampus, in medial habenula, anterior dorsal nucleus in the thalamus, tenia tecta, several nuclei of the general motor system and in optic nerve layer. Detected in a subset of elongated cells in taste buds.

It is found in the cell membrane. It catalyses the reaction Na(+)(in) = Na(+)(out). The catalysed reaction is K(+)(in) = K(+)(out). Activated by cAMP, and at 10-100 times higher concentrations, also by cGMP. cAMP binding promotes tetramerization and formation of an active channel. Compared to other family members, cAMP has less stimulatory effect on HCN1 because part of the molecules already contain bound cAMP and form homotetramers when cAMP levels are low, this inherent tetramerization in HCN1 results in a weaker response to increased cAMP. Functionally, hyperpolarization-activated ion channel that are permeable to sodium and potassium ions. Exhibits weak selectivity for potassium over sodium ions. Contributes to the native pacemaker currents in heart (If) and in neurons (Ih). Participates in cerebellar mechanisms of motor learning. May mediate responses to sour stimuli. This chain is Potassium/sodium hyperpolarization-activated cyclic nucleotide-gated channel 1 (Hcn1), found in Rattus norvegicus (Rat).